The primary structure comprises 312 residues: Calcium-independent mitochondrial carrier protein SCaMC-3L (312 aa).

Solcar repeat units lie at residues 27–113 (GTLW…SRNF), 121–206 (PSFQ…LRCL), and 217–304 (PSGL…MKKT). 6 helical membrane-spanning segments follow: residues 33-50 (LLSG…TAPL), 88-107 (GNGI…FSVF), 131-144 (SLAV…INPM), 182-200 (YLPN…LAVY), 219-243 (GLVS…LTLV), and 279-298 (GMTP…YLVY).

The protein belongs to the mitochondrial carrier (TC 2.A.29) family. As to expression, mainly expressed in testis and at lesser levels in brain.

The protein localises to the mitochondrion inner membrane. It catalyses the reaction Mg(2+)(out) + phosphate(in) + ATP(out) = Mg(2+)(in) + phosphate(out) + ATP(in). The enzyme catalyses ADP(out) + phosphate(in) + H(+)(out) = ADP(in) + phosphate(out) + H(+)(in). Functionally, calcium-independent ATP-Mg/Pi exchanger that catalyzes the electroneutral exchange of Mg-ATP or free ADP against an hydrogenphosphate and participates in the net transport of adenine nucleotides across the mitochondria inner membrane. The sequence is that of Calcium-independent mitochondrial carrier protein SCaMC-3L from Rattus norvegicus (Rat).